The following is a 351-amino-acid chain: Lipoyl synthase (351 aa).

The span at 1–10 (MNDSGNSSKV) shows a compositional bias: polar residues. Residues 1-27 (MNDSGNSSKVNVRPPSAGLGAPSPGKR) form a disordered region. Positions 14 to 24 (PPSAGLGAPSP) are enriched in low complexity. The [4Fe-4S] cluster site is built by cysteine 74, cysteine 79, cysteine 85, cysteine 100, cysteine 104, cysteine 107, and serine 311. The region spanning 86 to 300 (WEDREATFLI…KEQAKEIGFS (215 aa)) is the Radical SAM core domain.

The protein belongs to the radical SAM superfamily. Lipoyl synthase family. [4Fe-4S] cluster serves as cofactor.

The protein resides in the cytoplasm. It catalyses the reaction [[Fe-S] cluster scaffold protein carrying a second [4Fe-4S](2+) cluster] + N(6)-octanoyl-L-lysyl-[protein] + 2 oxidized [2Fe-2S]-[ferredoxin] + 2 S-adenosyl-L-methionine + 4 H(+) = [[Fe-S] cluster scaffold protein] + N(6)-[(R)-dihydrolipoyl]-L-lysyl-[protein] + 4 Fe(3+) + 2 hydrogen sulfide + 2 5'-deoxyadenosine + 2 L-methionine + 2 reduced [2Fe-2S]-[ferredoxin]. Its pathway is protein modification; protein lipoylation via endogenous pathway; protein N(6)-(lipoyl)lysine from octanoyl-[acyl-carrier-protein]: step 2/2. Functionally, catalyzes the radical-mediated insertion of two sulfur atoms into the C-6 and C-8 positions of the octanoyl moiety bound to the lipoyl domains of lipoate-dependent enzymes, thereby converting the octanoylated domains into lipoylated derivatives. The sequence is that of Lipoyl synthase from Tropheryma whipplei (strain TW08/27) (Whipple's bacillus).